The sequence spans 149 residues: Nucleoside diphosphate kinase (149 aa).

Positions 9, 57, 85, 91, 102, and 112 each coordinate ATP. Residue H115 is the Pros-phosphohistidine intermediate of the active site.

The protein belongs to the NDK family. In terms of assembly, homotetramer. Mg(2+) serves as cofactor.

It localises to the cytoplasm. The enzyme catalyses dZDP + ATP = dZTP + ADP. It carries out the reaction a 2'-deoxyribonucleoside 5'-diphosphate + ATP = a 2'-deoxyribonucleoside 5'-triphosphate + ADP. The catalysed reaction is a ribonucleoside 5'-diphosphate + ATP = a ribonucleoside 5'-triphosphate + ADP. It participates in purine metabolism. In terms of biological role, major role in the synthesis of nucleoside triphosphates other than ATP. The ATP gamma phosphate is transferred to the NDP beta phosphate via a ping-pong mechanism, using a phosphorylated active-site intermediate. (Microbial infection) Catalyzes the phosphorylation of dZDP to dZTP, when the bacterium is infected by a phage that produces the substrate for the synthesis of dZTP (2- amino-2'-deoxyadenosine 5'-triphosphate), which is then used by the phage as a DNA polymerase substrate. The sequence is that of Nucleoside diphosphate kinase from Synechococcus sp. (strain JA-3-3Ab) (Cyanobacteria bacterium Yellowstone A-Prime).